Reading from the N-terminus, the 290-residue chain is Probable protein phosphatase 2C 62 (290 aa).

The 251-residue stretch at 38–288 (KHGYHLVKGK…DDISCIVVKF (251 aa)) folds into the PPM-type phosphatase domain. 4 residues coordinate Mn(2+): Asp75, Gly76, Asp240, and Asp279.

Belongs to the PP2C family. Mg(2+) is required as a cofactor. It depends on Mn(2+) as a cofactor.

The catalysed reaction is O-phospho-L-seryl-[protein] + H2O = L-seryl-[protein] + phosphate. It catalyses the reaction O-phospho-L-threonyl-[protein] + H2O = L-threonyl-[protein] + phosphate. The chain is Probable protein phosphatase 2C 62 from Oryza sativa subsp. japonica (Rice).